Reading from the N-terminus, the 396-residue chain is Gap junction gamma-1 protein (396 aa).

At Met1–Lys22 the chain is on the cytoplasmic side. The chain crosses the membrane as a helical span at residues Ile23–Tyr45. The Extracellular portion of the chain corresponds to Asp46–Arg75. The chain crosses the membrane as a helical span at residues Phe76–Ala95. The Cytoplasmic segment spans residues Ile96–Lys175. The disordered stretch occupies residues Glu145–Arg165. A compositionally biased stretch (basic and acidic residues) spans Glu147–Asn156. A helical membrane pass occupies residues Ile176–Leu198. At Tyr199–Lys228 the chain is on the extracellular side. The chain crosses the membrane as a helical span at residues Thr229–Trp248. Residues Glu249–Ile396 lie on the Cytoplasmic side of the membrane. Residues Ala355 to Ile396 are disordered. Over residues Gly373–Ile396 the composition is skewed to low complexity.

The protein belongs to the connexin family. Gamma-type subfamily. As to quaternary structure, a connexon is composed of a hexamer of connexins. Interacts with CNST.

Its subcellular location is the cell membrane. It is found in the cell junction. It localises to the gap junction. Its function is as follows. One gap junction consists of a cluster of closely packed pairs of transmembrane channels, the connexons, through which materials of low MW diffuse from one cell to a neighboring cell. This is Gap junction gamma-1 protein (GJC1) from Canis lupus familiaris (Dog).